The primary structure comprises 511 residues: Bifunctional purine biosynthesis protein PurH (511 aa).

An MGS-like domain is found at 1–145 (MKKRALVSVS…KNHKFVSVIV (145 aa)).

Belongs to the PurH family.

It catalyses the reaction (6R)-10-formyltetrahydrofolate + 5-amino-1-(5-phospho-beta-D-ribosyl)imidazole-4-carboxamide = 5-formamido-1-(5-phospho-D-ribosyl)imidazole-4-carboxamide + (6S)-5,6,7,8-tetrahydrofolate. The catalysed reaction is IMP + H2O = 5-formamido-1-(5-phospho-D-ribosyl)imidazole-4-carboxamide. Its pathway is purine metabolism; IMP biosynthesis via de novo pathway; 5-formamido-1-(5-phospho-D-ribosyl)imidazole-4-carboxamide from 5-amino-1-(5-phospho-D-ribosyl)imidazole-4-carboxamide (10-formyl THF route): step 1/1. The protein operates within purine metabolism; IMP biosynthesis via de novo pathway; IMP from 5-formamido-1-(5-phospho-D-ribosyl)imidazole-4-carboxamide: step 1/1. This chain is Bifunctional purine biosynthesis protein PurH, found in Bacillus cereus (strain ZK / E33L).